Here is a 114-residue protein sequence, read N- to C-terminus: Fatty acid-binding protein, liver (114 aa).

This sequence belongs to the calycin superfamily. Fatty-acid binding protein (FABP) family. Post-translationally, the N-terminus is blocked.

It localises to the cytoplasm. Its function is as follows. FABPs are thought to play a role in the intracellular transport of long-chain fatty acids and their acyl-CoA esters. The polypeptide is Fatty acid-binding protein, liver (Lethenteron camtschaticum (Japanese lamprey)).